The primary structure comprises 562 residues: Cytochrome c oxidase subunit 1 (562 aa).

Residues 21-41 (TLYFLVLGFLALIVGSLFGPF) traverse the membrane as a helical segment. Histidine 72 contacts Fe(II)-heme a. 8 helical membrane-spanning segments follow: residues 74 to 94 (VLNA…YLPA), 105 to 125 (LMWL…LPLL), 144 to 164 (AFYL…YIVL), 187 to 207 (VVFW…AVLF), 227 to 247 (LFWW…YAII), 267 to 287 (LAFL…QFAD), 300 to 320 (VLTL…AASL), and 345 to 365 (AFVA…GGIV). The Cu cation site is built by histidine 233, tyrosine 237, histidine 282, and histidine 283. A cross-link (1'-histidyl-3'-tyrosine (His-Tyr)) is located at residues 233-237 (HPIVY). Histidine 384 provides a ligand contact to heme a3. The next 4 membrane-spanning stretches (helical) occupy residues 385-405 (FHLQ…YWLL), 420-440 (LGLA…VGLH), 471-491 (VLAG…LFSV), and 527-547 (IGFW…PTLV). Position 386 (histidine 386) interacts with Fe(II)-heme a.

Belongs to the heme-copper respiratory oxidase family. Requires heme as cofactor. Cu cation serves as cofactor.

The protein localises to the cell membrane. The enzyme catalyses 4 Fe(II)-[cytochrome c] + O2 + 8 H(+)(in) = 4 Fe(III)-[cytochrome c] + 2 H2O + 4 H(+)(out). It participates in energy metabolism; oxidative phosphorylation. The protein is Cytochrome c oxidase subunit 1 (cbaA) of Thermus thermophilus (strain ATCC 27634 / DSM 579 / HB8).